Here is an 81-residue protein sequence, read N- to C-terminus: Accessory gland protein Acp63F (81 aa).

Residues M1 to A16 form the signal peptide.

As to expression, main cells of accessory gland and seminal fluid.

It localises to the secreted. Responsible for physiological and behavioral changes in mated female flies. The chain is Accessory gland protein Acp63F (Acp63F) from Drosophila melanogaster (Fruit fly).